A 614-amino-acid chain; its full sequence is Major facilitator superfamily domain-containing protein 6-like protein B (614 aa).

2 consecutive transmembrane segments (helical) span residues 41 to 61 (LGLG…VHLL) and 78 to 98 (FFIM…AFYP). Residues 177-191 (HQRFTDQFPSSSPLT) are compositionally biased toward polar residues. The disordered stretch occupies residues 177-243 (HQRFTDQFPS…PFATHPNVSH (67 aa)). A compositionally biased stretch (low complexity) spans 205-227 (GSGKAQKANSSKSSASNSKQRSS). 9 helical membrane passes run 270–290 (IFLI…PLEW), 312–332 (LWIW…FLID), 345–365 (VSFH…LSTL), 393–413 (IVLT…IQNF), 425–445 (ELYM…LYFF), 457–477 (WMVV…SFLW), 480–500 (WSVV…WWAI), 520–540 (LRWL…GFII), and 546–566 (AVLY…FLLV).

This sequence belongs to the major facilitator superfamily. MFSD6 family.

The protein resides in the membrane. This is Major facilitator superfamily domain-containing protein 6-like protein B (mfsd6l-b) from Xenopus laevis (African clawed frog).